A 603-amino-acid chain; its full sequence is Elongation factor 4 (603 aa).

In terms of domain architecture, tr-type G spans 7–189 (SRIRNFSIIA…SIVHLVPPPE (183 aa)). GTP contacts are provided by residues 19 to 24 (DHGKST) and 136 to 139 (NKID).

It belongs to the TRAFAC class translation factor GTPase superfamily. Classic translation factor GTPase family. LepA subfamily.

It localises to the cell inner membrane. It carries out the reaction GTP + H2O = GDP + phosphate + H(+). Functionally, required for accurate and efficient protein synthesis under certain stress conditions. May act as a fidelity factor of the translation reaction, by catalyzing a one-codon backward translocation of tRNAs on improperly translocated ribosomes. Back-translocation proceeds from a post-translocation (POST) complex to a pre-translocation (PRE) complex, thus giving elongation factor G a second chance to translocate the tRNAs correctly. Binds to ribosomes in a GTP-dependent manner. The sequence is that of Elongation factor 4 from Acaryochloris marina (strain MBIC 11017).